The sequence spans 555 residues: Beta-caryophyllene synthase (555 aa).

Asp313, Asp317, Asp456, and Glu464 together coordinate Mg(2+). A DDXXD motif motif is present at residues 313 to 317 (DDIYD).

This sequence belongs to the terpene synthase family. Requires Mg(2+) as cofactor.

It carries out the reaction (2E,6E)-farnesyl diphosphate = (+)-(E)-beta-caryophyllene + diphosphate. It functions in the pathway secondary metabolite biosynthesis; terpenoid biosynthesis. Functionally, sesquiterpene synthase converting farnesyl diphosphate to beta-caryophyllene as the major product. The chain is Beta-caryophyllene synthase from Phyla dulcis (Aztec sweet herb).